The following is a 487-amino-acid chain: 7-deoxyloganetin glucosyltransferase (487 aa).

His-25 (proton acceptor) is an active-site residue. His-25 serves as a coordination point for an anthocyanidin. Asp-129 acts as the Charge relay in catalysis. The UDP-alpha-D-glucose site is built by Thr-151, Gln-366, His-381, Trp-384, Asn-385, Ser-386, and Glu-389. Residue Ala-404 participates in an anthocyanidin binding. UDP-alpha-D-glucose is bound by residues Glu-405 and Gln-406.

This sequence belongs to the UDP-glycosyltransferase family. Expressed in roots.

It catalyses the reaction 7-deoxyloganetin + UDP-alpha-D-glucose = 7-deoxyloganin + UDP + H(+). Functionally, iridoid glucosyltransferase acting exclusively on 7-deoxyloganetin. No activity with 7-deoxyloganetic acid. This is 7-deoxyloganetin glucosyltransferase (UGT85A23) from Catharanthus roseus (Madagascar periwinkle).